The following is a 218-amino-acid chain: Urease accessory protein UreG (218 aa).

22–29 (GPVGSGKT) is a binding site for GTP.

This sequence belongs to the SIMIBI class G3E GTPase family. UreG subfamily. As to quaternary structure, homodimer. UreD, UreF and UreG form a complex that acts as a GTP-hydrolysis-dependent molecular chaperone, activating the urease apoprotein by helping to assemble the nickel containing metallocenter of UreC. The UreE protein probably delivers the nickel.

The protein localises to the cytoplasm. Its function is as follows. Facilitates the functional incorporation of the urease nickel metallocenter. This process requires GTP hydrolysis, probably effectuated by UreG. This chain is Urease accessory protein UreG, found in Polaromonas naphthalenivorans (strain CJ2).